We begin with the raw amino-acid sequence, 253 residues long: uncharacterized protein (253 aa).

Residues Ile17, Ser36, Asp62, Asn89, Tyr158, Lys162, Val191, and Thr193 each contribute to the NADP(+) site. Residue Tyr158 is the Proton donor of the active site. Catalysis depends on Lys162, which acts as the Lowers pKa of active site Tyr.

Belongs to the short-chain dehydrogenases/reductases (SDR) family.

It is found in the cytoplasm. The protein resides in the nucleus. This is an uncharacterized protein from Schizosaccharomyces pombe (strain 972 / ATCC 24843) (Fission yeast).